The primary structure comprises 363 residues: Inositol-3-phosphate synthase (363 aa).

Lysine 65 participates in a covalent cross-link: Isoglutamyl lysine isopeptide (Lys-Gln) (interchain with Q-Cter in protein Pup). Positions 70, 129, 149, 192, 227, and 240 each coordinate NAD(+).

It belongs to the myo-inositol 1-phosphate synthase family. The cofactor is NAD(+). In terms of processing, pupylated at Lys-65 by the prokaryotic ubiquitin-like protein Pup, which leads to its degradation by the proteasome.

The catalysed reaction is D-glucose 6-phosphate = 1D-myo-inositol 3-phosphate. Functionally, key enzyme in myo-inositol biosynthesis pathway that catalyzes the conversion of glucose 6-phosphate to 1D-myo-inositol 3-phosphate in a NAD-dependent manner. The sequence is that of Inositol-3-phosphate synthase (ino1) from Mycolicibacterium smegmatis (strain ATCC 700084 / mc(2)155) (Mycobacterium smegmatis).